Here is a 593-residue protein sequence, read N- to C-terminus: SPI-1 type 3 secretion system translocon protein SctE (593 aa).

2 coiled-coil regions span residues 151 to 208 (DTAK…ATDA) and 287 to 314 (EGRQAEMEKKSAEFQEETRKAEETNRIM). Transmembrane regions (helical) follow at residues 330 to 350 (VVAAVFTGGASLALAAVGLAV) and 409 to 429 (IVGAIVAAIAMVAVIVVVAVV).

It belongs to the SctE/SipB/YopB family. In terms of assembly, the core secretion machinery of the T3SS is composed of approximately 20 different proteins, including cytoplasmic components, a base, an export apparatus and a needle. This subunit is involved in the formation of a pore, called the translocon, in host membrane.

The protein resides in the secreted. It is found in the host membrane. Component of the type III secretion system 1 (SPI-1 T3SS), also called injectisome, which is used to inject bacterial effector proteins into eukaryotic host cells. SipB/SctE1 and SipC/SctB are inserted into the host membrane where they form a pore and allow the translocation of effector proteins into the cytosol of target cells. The polypeptide is SPI-1 type 3 secretion system translocon protein SctE (Salmonella dublin).